Reading from the N-terminus, the 333-residue chain is 4-hydroxythreonine-4-phosphate dehydrogenase (333 aa).

His-133 and Thr-134 together coordinate substrate. Positions 169, 214, and 269 each coordinate a divalent metal cation. Residues Lys-277, Asn-286, and Arg-295 each coordinate substrate.

The protein belongs to the PdxA family. In terms of assembly, homodimer. The cofactor is Zn(2+). Mg(2+) serves as cofactor. Requires Co(2+) as cofactor.

It is found in the cytoplasm. The enzyme catalyses 4-(phosphooxy)-L-threonine + NAD(+) = 3-amino-2-oxopropyl phosphate + CO2 + NADH. The protein operates within cofactor biosynthesis; pyridoxine 5'-phosphate biosynthesis; pyridoxine 5'-phosphate from D-erythrose 4-phosphate: step 4/5. Its function is as follows. Catalyzes the NAD(P)-dependent oxidation of 4-(phosphooxy)-L-threonine (HTP) into 2-amino-3-oxo-4-(phosphooxy)butyric acid which spontaneously decarboxylates to form 3-amino-2-oxopropyl phosphate (AHAP). This is 4-hydroxythreonine-4-phosphate dehydrogenase from Caulobacter vibrioides (strain ATCC 19089 / CIP 103742 / CB 15) (Caulobacter crescentus).